A 396-amino-acid polypeptide reads, in one-letter code: Elongation factor Tu 1 (396 aa).

In terms of domain architecture, tr-type G spans 10-206 (KPHVNVGTIG…QIDSYIPEPE (197 aa)). The segment at 19–26 (GHIDHGKT) is G1. 19–26 (GHIDHGKT) lines the GTP pocket. Thr-26 serves as a coordination point for Mg(2+). The G2 stretch occupies residues 60–64 (GITIA). Residues 81–84 (DCPG) form a G3 region. Residues 81 to 85 (DCPGH) and 136 to 139 (NKCD) contribute to the GTP site. The tract at residues 136–139 (NKCD) is G4. Residues 174 to 176 (SAL) are G5.

The protein belongs to the TRAFAC class translation factor GTPase superfamily. Classic translation factor GTPase family. EF-Tu/EF-1A subfamily. In terms of assembly, monomer.

It localises to the cytoplasm. The catalysed reaction is GTP + H2O = GDP + phosphate + H(+). In terms of biological role, GTP hydrolase that promotes the GTP-dependent binding of aminoacyl-tRNA to the A-site of ribosomes during protein biosynthesis. This Desulfotalea psychrophila (strain LSv54 / DSM 12343) protein is Elongation factor Tu 1.